Here is a 110-residue protein sequence, read N- to C-terminus: U32-theraphotoxin-Cg1a (110 aa).

The first 19 residues, 1-19 (MNHCFLILFTLIVFTVVWS), serve as a signal peptide directing secretion. Positions 20-43 (LEENEEYPDEDEMIESFMDGYSYR) are excised as a propeptide. 4 disulfide bridges follow: Cys49–Cys63, Cys56–Cys69, Cys60–Cys105, and Cys62–Cys80.

This sequence belongs to the neurotoxin 03 (Tx2) family. 02 subfamily. Expressed by the venom gland.

The protein resides in the secreted. Probable ion channel inhibitor. This is U32-theraphotoxin-Cg1a from Chilobrachys guangxiensis (Chinese earth tiger tarantula).